A 172-amino-acid chain; its full sequence is Protein-export protein SecB (172 aa).

Belongs to the SecB family. Homotetramer, a dimer of dimers. One homotetramer interacts with 1 SecA dimer.

The protein localises to the cytoplasm. In terms of biological role, one of the proteins required for the normal export of preproteins out of the cell cytoplasm. It is a molecular chaperone that binds to a subset of precursor proteins, maintaining them in a translocation-competent state. It also specifically binds to its receptor SecA. The polypeptide is Protein-export protein SecB (Dinoroseobacter shibae (strain DSM 16493 / NCIMB 14021 / DFL 12)).